The following is a 254-amino-acid chain: Ribonuclease HII (254 aa).

Residues 70–254 form the RNase H type-2 domain; it reads QAIAGIDEVG…TFEPVKSMLG (185 aa). A divalent metal cation contacts are provided by aspartate 76, glutamate 77, and aspartate 168.

The protein belongs to the RNase HII family. Requires Mn(2+) as cofactor. The cofactor is Mg(2+).

The protein localises to the cytoplasm. The catalysed reaction is Endonucleolytic cleavage to 5'-phosphomonoester.. Its function is as follows. Endonuclease that specifically degrades the RNA of RNA-DNA hybrids. In Streptococcus gordonii (strain Challis / ATCC 35105 / BCRC 15272 / CH1 / DL1 / V288), this protein is Ribonuclease HII.